The chain runs to 157 residues: Transcription elongation factor GreA (157 aa).

The stretch at 46–73 (AEYHSARERQSFIEGRIAELEEIISAAE) forms a coiled coil.

This sequence belongs to the GreA/GreB family.

Functionally, necessary for efficient RNA polymerase transcription elongation past template-encoded arresting sites. The arresting sites in DNA have the property of trapping a certain fraction of elongating RNA polymerases that pass through, resulting in locked ternary complexes. Cleavage of the nascent transcript by cleavage factors such as GreA or GreB allows the resumption of elongation from the new 3'terminus. GreA releases sequences of 2 to 3 nucleotides. This is Transcription elongation factor GreA from Acidiphilium cryptum (strain JF-5).